Reading from the N-terminus, the 214-residue chain is MNLFLDTANIDEIKKVHELGLLDGITTNPSIIAKSGRKFTEVIKEICSFVKGPVSAEVLATDAPTMIKEGLELSKIAENVVVKVPLIPEGMKAVKAFAEQGIQTNVTLCFTANQALLAAKAGATFISPFVGRLDDVGYDGLELISEIREIYDNYGIETQILAASVRHPIHFKEVALRGADCVTLPYSVFEMLFKHPLTDSGLAKFVEDSKKLNW.

Lys-83 acts as the Schiff-base intermediate with substrate in catalysis.

Belongs to the transaldolase family. Type 3B subfamily.

The protein resides in the cytoplasm. The enzyme catalyses D-sedoheptulose 7-phosphate + D-glyceraldehyde 3-phosphate = D-erythrose 4-phosphate + beta-D-fructose 6-phosphate. It participates in carbohydrate degradation; pentose phosphate pathway; D-glyceraldehyde 3-phosphate and beta-D-fructose 6-phosphate from D-ribose 5-phosphate and D-xylulose 5-phosphate (non-oxidative stage): step 2/3. Its function is as follows. Transaldolase is important for the balance of metabolites in the pentose-phosphate pathway. The protein is Probable transaldolase of Leptospira biflexa serovar Patoc (strain Patoc 1 / Ames).